The chain runs to 499 residues: Chitinase B (499 aa).

An N-terminal signal peptide occupies residues 1 to 41 (MSTRKAVIGYYFIPTNQINNYTETDTSVVPFPVSNITPAKA). A GH18 domain is found at 42 to 425 (KQLTHINFSF…AALDRYFNAA (384 aa)). Chitin is bound by residues 68–69 (DA) and 95–98 (GGWY). The active-site Proton donor is glutamate 144. Chitin contacts are provided by residues tyrosine 145, 212 to 215 (MTYD), and tryptophan 403. One can recognise a Chitin-binding type-3 domain in the interval 438-498 (LRYTGVGPGN…DSAWLKVGRL (61 aa)).

The protein belongs to the glycosyl hydrolase 18 family. Chitinase class II subfamily.

The catalysed reaction is Random endo-hydrolysis of N-acetyl-beta-D-glucosaminide (1-&gt;4)-beta-linkages in chitin and chitodextrins.. The sequence is that of Chitinase B (chiB) from Serratia marcescens.